We begin with the raw amino-acid sequence, 504 residues long: Endosomal/lysosomal proton channel TMEM175 (504 aa).

Positions 1–27 (MSQPRTPEQALDTPGDCPPGRRDEDAG) are disordered. Over 1–33 (MSQPRTPEQALDTPGDCPPGRRDEDAGEGIQCS) the chain is Cytoplasmic. Residue T6 is modified to Phosphothreonine. The helical transmembrane segment at 34-56 (QRMLSFSDALLSIIATVMILPVT) threads the bilayer. Positions 35-41 (RMLSFSD) match the RxxxFSD motif 1 motif. Over 57 to 77 (HTEISPEQQFDRSVQRLLATR) the chain is Lumenal. The interval 58–63 (TEISPE) is short helix H1-1. Positions 65–71 (QFDRSVQ) are short helix H2-1. The chain crosses the membrane as a helical span at residues 78-100 (IAVYLMTFLIVTVAWAAHTRLFQ). Residues 101–106 (VVGKTD) lie on the Cytoplasmic side of the membrane. A helical membrane pass occupies residues 107–128 (DTLALLNLACMMTITFLPYTFS). Over 129–138 (LMVTFPDVPL) the chain is Lumenal. A helical membrane pass occupies residues 139 to 160 (GIFLFCVCVIAIGVVQALIVGY). Residues 161 to 184 (AFHFPHLLSPQIQRSAHRALYRRH) lie on the Cytoplasmic side of the membrane. A helical membrane pass occupies residues 185 to 205 (VLGIVLQGPALCFAAAIFSLF). Residues 206–210 (FVPLS) lie on the Lumenal side of the membrane. Residues 211–230 (YLLMVTVILLPYVSKVTGWC) form a helical membrane-spanning segment. Residues 231 to 257 (RDRLLGHREPSAHPVEVFSFDLHEPLS) lie on the Cytoplasmic side of the membrane. The chain crosses the membrane as a helical span at residues 258–282 (KERVEAFSDGVYAIVATLLILDICE). The short motif at 260-266 (RVEAFSD) is the RxxxFSD motif 2 element. Over 283-309 (DNVPDPKDVKERFSGSLVAALSATGPR) the chain is Lumenal. The short helix H1-2 stretch occupies residues 288–296 (PKDVKERFS). The short helix H2-2 stretch occupies residues 298–304 (SLVAALS). Residues 310-332 (FLAYFGSFATVGLLWFAHHSLFL) traverse the membrane as a helical segment. At 333-338 (HVRKAT) the chain is on the cytoplasmic side. A helical membrane pass occupies residues 339-360 (RAMGLLNTLSLAFVGGLPLAYQ). At 361–375 (QTSAFARQPRDELER) the chain is on the lumenal side. Residues 376 to 396 (VRVSCTIIFLASIFQLAMWTT) traverse the membrane as a helical segment. The Cytoplasmic portion of the chain corresponds to 397–416 (ALLHQAETLQPSVWFGGREH). The chain crosses the membrane as a helical span at residues 417–440 (VLMFAKLALYPCASLLAFASTCLL). Residues 441–442 (SR) lie on the Lumenal side of the membrane. A helical membrane pass occupies residues 443 to 469 (FSVGIFHLMQIAVPCAFLLLRLLVGLA). Residues 470 to 504 (LATLRVLRGLARPEHPPPAPTGQDDPQSQLLPAPC) are Cytoplasmic-facing. The interval 483–504 (EHPPPAPTGQDDPQSQLLPAPC) is disordered. Residues 493 to 504 (DDPQSQLLPAPC) are compositionally biased toward polar residues.

The protein belongs to the TMEM175 family. In terms of assembly, homodimer. Interacts with AKT (AKT1, AKT2 or AKT3); leading to formation of the lysoK(GF) complex, which activates the channel. Interacts with LAMP1; inhibiting the proton channel activity of TMEM175. Interacts with LAMP2; inhibiting the proton channel activity of TMEM175. As to expression, widely expressed.

It is found in the endosome membrane. It localises to the lysosome membrane. The catalysed reaction is H(+)(in) = H(+)(out). It catalyses the reaction K(+)(in) = K(+)(out). Active at low pH (under pH 4.6): proton channel activity is activated by luminal side protons. Polyunsaturated fatty acids, such as arachidonic acid, also activate the channel activity. Proton channel activity is directly inhibited by LAMP1 or LAMP2, facilitating lysosomal acidification. Channel activity is activated following interaction with AKT (AKT1, AKT2 or AKT3): interaction promotes activation from closed to an open state. Activation by AKT is independent of AKT serine/threonine-protein kinase activity. Functionally, proton-activated proton channel that catalyzes proton efflux from endosomes and lysosomes to maintain a steady-state pH. Activated at low pH (under pH 4.6) by luminal side protons: selectively mediates lysosomal proton release from lysosomes, eliciting a proton leak that balances V-ATPase activity to maintain pH homeostasis. Regulation of lumenal pH stability is required for autophagosome-lysosome fusion. Also acts as a potassium channel at higher pH, regulating potassium conductance in endosomes and lysosomes. Constitutes the pore-forming subunit of the lysoK(GF) complex, a complex activated by extracellular growth factors. The lysoK(GF) complex is composed of TMEM175 and AKT (AKT1, AKT2 or AKT3), a major target of growth factor receptors: in the complex, TMEM175 channel is opened by conformational changes by AKT, leading to its activation. The lysoK(GF) complex is required to protect neurons against stress-induced damage. The chain is Endosomal/lysosomal proton channel TMEM175 from Homo sapiens (Human).